A 637-amino-acid polypeptide reads, in one-letter code: Chaperone protein HtpG (637 aa).

Residues 1–345 (MSQQETHGFQ…SNDLPLNVSR (345 aa)) form an a; substrate-binding region. A b region spans residues 346-562 (EILQDNHITK…EGEMSTQMIK (217 aa)). The segment at 563–637 (LMQAAGQPVP…MNQMLLANMK (75 aa)) is c.

It belongs to the heat shock protein 90 family. In terms of assembly, homodimer.

Its subcellular location is the cytoplasm. Molecular chaperone. Has ATPase activity. The chain is Chaperone protein HtpG from Shewanella putrefaciens (strain CN-32 / ATCC BAA-453).